Reading from the N-terminus, the 337-residue chain is Vacuolar protein sorting-associated protein 26B-A (337 aa).

A disordered region spans residues 313–337 (RFEGTSHPETRPQHSGAAAVEQEHE).

This sequence belongs to the VPS26 family. As to quaternary structure, component of the heterotrimeric retromer cargo-selective complex (CSC) which is believed to associate with variable sorting nexins to form functionally distinct retromer complex variants.

It is found in the cytoplasm. The protein resides in the endosome membrane. It localises to the early endosome. In terms of biological role, acts as a component of the retromer cargo-selective complex (CSC). The CSC is believed to be the core functional component of retromer or respective retromer complex variants acting to prevent missorting of selected transmembrane cargo proteins into the lysosomal degradation pathway. Retromer mediates retrograde transport of cargo proteins from endosomes to the trans-Golgi network (TGN). In Xenopus laevis (African clawed frog), this protein is Vacuolar protein sorting-associated protein 26B-A (vps26b-a).